The chain runs to 154 residues: 6,7-dimethyl-8-ribityllumazine synthase (154 aa).

5-amino-6-(D-ribitylamino)uracil is bound by residues phenylalanine 22, 56 to 58, and 80 to 82; these read AFE and TVI. 85-86 provides a ligand contact to (2S)-2-hydroxy-3-oxobutyl phosphate; sequence AT. The active-site Proton donor is histidine 88. Phenylalanine 113 contacts 5-amino-6-(D-ribitylamino)uracil. Residue arginine 127 participates in (2S)-2-hydroxy-3-oxobutyl phosphate binding.

It belongs to the DMRL synthase family. Forms an icosahedral capsid composed of 60 subunits, arranged as a dodecamer of pentamers.

The catalysed reaction is (2S)-2-hydroxy-3-oxobutyl phosphate + 5-amino-6-(D-ribitylamino)uracil = 6,7-dimethyl-8-(1-D-ribityl)lumazine + phosphate + 2 H2O + H(+). It functions in the pathway cofactor biosynthesis; riboflavin biosynthesis; riboflavin from 2-hydroxy-3-oxobutyl phosphate and 5-amino-6-(D-ribitylamino)uracil: step 1/2. In terms of biological role, catalyzes the formation of 6,7-dimethyl-8-ribityllumazine by condensation of 5-amino-6-(D-ribitylamino)uracil with 3,4-dihydroxy-2-butanone 4-phosphate. This is the penultimate step in the biosynthesis of riboflavin. The chain is 6,7-dimethyl-8-ribityllumazine synthase from Bacillus amyloliquefaciens (Bacillus velezensis).